The primary structure comprises 561 residues: Asparagine synthetase [glutamine-hydrolyzing] (561 aa).

Cys2 functions as the For GATase activity in the catalytic mechanism. The region spanning 2–191 (CGIWALFGSD…PGHYEVLDLK (190 aa)) is the Glutamine amidotransferase type-2 domain. L-glutamine-binding positions include 49–53 (RLAVV), 75–77 (NGE), and Asp97. The region spanning 213–536 (HALYDNVEKL…PGRADWLSHY (324 aa)) is the Asparagine synthetase domain. ATP contacts are provided by residues Leu256, Ile288, and 363 to 364 (SG). Lys385 bears the N6-acetyllysine mark. Thr545 carries the phosphothreonine modification. Ser557 carries the phosphoserine modification.

The enzyme catalyses L-aspartate + L-glutamine + ATP + H2O = L-asparagine + L-glutamate + AMP + diphosphate + H(+). The protein operates within amino-acid biosynthesis; L-asparagine biosynthesis; L-asparagine from L-aspartate (L-Gln route): step 1/1. The sequence is that of Asparagine synthetase [glutamine-hydrolyzing] (ASNS) from Pongo abelii (Sumatran orangutan).